Reading from the N-terminus, the 40-residue chain is Large ribosomal subunit protein bL33c (40 aa).

The protein belongs to the bacterial ribosomal protein bL33 family.

Its subcellular location is the plastid. The protein localises to the chloroplast. The protein is Large ribosomal subunit protein bL33c (rpl33) of Pisum sativum (Garden pea).